The primary structure comprises 347 residues: Nicotinate-nucleotide--dimethylbenzimidazole phosphoribosyltransferase (347 aa).

The active-site Proton acceptor is the Glu-316.

This sequence belongs to the CobT family.

It catalyses the reaction 5,6-dimethylbenzimidazole + nicotinate beta-D-ribonucleotide = alpha-ribazole 5'-phosphate + nicotinate + H(+). Its pathway is nucleoside biosynthesis; alpha-ribazole biosynthesis; alpha-ribazole from 5,6-dimethylbenzimidazole: step 1/2. Its function is as follows. Catalyzes the synthesis of alpha-ribazole-5'-phosphate from nicotinate mononucleotide (NAMN) and 5,6-dimethylbenzimidazole (DMB). The sequence is that of Nicotinate-nucleotide--dimethylbenzimidazole phosphoribosyltransferase from Vibrio campbellii (strain ATCC BAA-1116).